The primary structure comprises 3933 residues: Protein DOP1 homolog PFC0245c (3933 aa).

4 helical membrane passes run 70–90 (LNPLLPSGVHSKALIIYSSIF), 98–118 (FINNIHILCSGIFEFMLHCTI), 140–160 (IFAYALLLSLFNVVDSDNNIL), and 163–183 (IYSINNYIGENIFFNNIWLLL). 3 disordered regions span residues 468 to 494 (RLNNNNNNNNNNNNNNNNNGDNLKYQG), 543 to 600 (ININ…NMLH), and 614 to 656 (KKIN…SSSS). Positions 470 to 486 (NNNNNNNNNNNNNNNNN) are enriched in low complexity. Residues 546–561 (NDDDNLNYDDNEDDEY) are compositionally biased toward acidic residues. 2 stretches are compositionally biased toward low complexity: residues 563–576 (NYHNNNYNDRNYFN) and 585–597 (ENNNNNNHSNNNN). Residues 620-651 (GQTNNYDDDEEEEDEEEEDNNNNTSYNNNNNN) are a coiled coil. A compositionally biased stretch (acidic residues) spans 625 to 639 (YDDDEEEEDEEEEDN). Positions 640 to 656 (NNNTSYNNNNNNSSSSS) are enriched in low complexity. The next 3 membrane-spanning stretches (helical) occupy residues 782-802 (MLNLNLISYENILNIFLYTFY), 842-862 (YLYIQFLFHFNLATLKLMNFL), and 1186-1206 (FYFWCFLFLHIIRINFNKSLL). A compositionally biased stretch (acidic residues) spans 1216-1255 (DDTDDDDDDDDDDDDEEEDDDDEDDDDEDDEEEDDEEDLG). 2 disordered regions span residues 1216 to 1284 (DDTD…MNKK) and 1361 to 1405 (TNNN…NNFN). Basic residues predominate over residues 1263 to 1284 (SSKKGKKKKKKSVHKNKLMNKK). A coiled-coil region spans residues 1349–1403 (ELNKMKYMNEDITNNNNNINNNSNNNNNNKNNINNNNNNNNNNNNNNNNLNNLNN). Low complexity predominate over residues 1362–1405 (NNNNNINNNSNNNNNNKNNINNNNNNNNNNNNNNNNLNNLNNFN). A run of 2 helical transmembrane segments spans residues 1462–1482 (FIKLFFDINYLYFFCDNMFCL) and 1997–2017 (KNIFFIMKFCQFLIEIFKLIY). The segment at 2691-2739 (HRRKMNRQNIRTDSSNNNNNNNINSNNNNNNNNNNNNNNNNNNNNNIYN) is disordered. The segment covering 2704–2739 (SSNNNNNNNINSNNNNNNNNNNNNNNNNNNNNNIYN) has biased composition (low complexity). The next 5 helical transmembrane spans lie at 2860 to 2880 (INLNEFMYFLFNIYLNICTLT), 2905 to 2925 (IMSSLWFLYILFIIENNHIYV), 3017 to 3037 (YSEIAAINALSFLLMCFYHTV), 3200 to 3220 (ILILICIIIIKNDENEIYIII), and 3276 to 3296 (IIINILIKRNVSFINFYSWIF). The interval 3620–3646 (LKNEKSTRTYNSSLQEGSDYDEEEDEE) is disordered. The span at 3637 to 3646 (SDYDEEEDEE) shows a compositional bias: acidic residues. Positions 3897–3925 (KEETIILLKELNSVENDINDLFLEVDLNE) form a coiled coil.

It belongs to the DOP1 family.

It localises to the membrane. May be involved in protein traffic between late Golgi and early endosomes. This chain is Protein DOP1 homolog PFC0245c, found in Plasmodium falciparum (isolate 3D7).